The following is a 210-amino-acid chain: N-(5'-phosphoribosyl)anthranilate isomerase (210 aa).

It belongs to the TrpF family.

The catalysed reaction is N-(5-phospho-beta-D-ribosyl)anthranilate = 1-(2-carboxyphenylamino)-1-deoxy-D-ribulose 5-phosphate. It functions in the pathway amino-acid biosynthesis; L-tryptophan biosynthesis; L-tryptophan from chorismate: step 3/5. This Pseudomonas fluorescens (strain ATCC BAA-477 / NRRL B-23932 / Pf-5) protein is N-(5'-phosphoribosyl)anthranilate isomerase.